The sequence spans 520 residues: Dynein axonemal assembly factor 8 (520 aa).

Disordered stretches follow at residues 93–202 (PVLV…LRQE), 217–256 (RDAC…EGPP), 328–366 (CARK…QLAQ), and 388–520 (DHLS…LEQL). Positions 111-125 (RTKDASSQEGRDPGR) are enriched in basic and acidic residues. Ser161 bears the Phosphoserine mark. Ser351 carries the phosphoserine modification. Positions 401 to 410 (DSEEEEEEEM) are enriched in acidic residues. Over residues 420 to 437 (SPSSLGLRTCTGKSQLLQ) the composition is skewed to polar residues.

In terms of tissue distribution, expressed in respiratory ciliated cells (at protein level).

The protein resides in the dynein axonemal particle. It localises to the cytoplasm. Functionally, in cyliated cells, dynein axonemal particle-specific protein required for deployment of ODA to the axoneme. Interacts with outer dynein arm (ODA) subunits. This chain is Dynein axonemal assembly factor 8, found in Homo sapiens (Human).